We begin with the raw amino-acid sequence, 395 residues long: MGNCWGAKISSESPCRSASSPSGGTSKYASNSSVSAASVPPTPRSEDEILEAANVKAFAFNELRTATRNFRPDSVLGEGGFGSVFKGWIDEKTLAPTKPGTGMVIAVKKLNQEGHQGHREWLAEVNYLGQLSHPYLVRLVGYCVEDEQRLLVYEFMPRGSLENHLFRRSTHFQPLSWNLRMKIALGAAKGLAFLHSDKVKVIYRDFKTSNVLLDANYDAKLSDFGLAKDGPTGDKSHVSTRVMGTYGYAAPEYLATGHLTTKSDVYSFGVVLLEMLSGRRALDKNRPTGEHNLVEWARPYLMSKRRIFRILDARLGGQYSLAKAQKAATLALQCISVEAKNRPNMEQVVAVLEQLQDSKETGANPQLQKKSSSKNAGSNGSKPSSKGKPANARLV.

The interval 1–45 (MGNCWGAKISSESPCRSASSPSGGTSKYASNSSVSAASVPPTPRS) is disordered. 2 stretches are compositionally biased toward low complexity: residues 10–22 (SSES…SSPS) and 29–39 (ASNSSVSAASV). The 286-residue stretch at 70 to 355 (FRPDSVLGEG…EQVVAVLEQL (286 aa)) folds into the Protein kinase domain. Residues 76–84 (LGEGGFGSV) and Lys-108 each bind ATP. Residue Asp-205 is the Proton acceptor of the active site. A disordered region spans residues 359 to 395 (KETGANPQLQKKSSSKNAGSNGSKPSSKGKPANARLV). The segment covering 369–395 (KKSSSKNAGSNGSKPSSKGKPANARLV) has biased composition (low complexity).

Belongs to the protein kinase superfamily. Ser/Thr protein kinase family. Interacts with CERK1.

The catalysed reaction is L-seryl-[protein] + ATP = O-phospho-L-seryl-[protein] + ADP + H(+). It catalyses the reaction L-threonyl-[protein] + ATP = O-phospho-L-threonyl-[protein] + ADP + H(+). In terms of biological role, functions downstream of CERK1 in the microbial peptidoglycans (PGNs) and fungal chitin signaling pathways that mediate innate immunity. Participates in the activation of defense genes during response to PGN and chitin. This Oryza sativa subsp. japonica (Rice) protein is Receptor-like cytoplasmic kinase 176.